Consider the following 556-residue polypeptide: MTAPIWMASPPEVHSALLSSGPGPGPLLVSAEGWHSLSIAYAETADELAALLAAVQAGTWDGPTAAVYVAAHTPYLAWLVQASANSAAMATRQETAATAYGTALAAMPTLAELGANHALHGVLMATNFFGINTIPIALNESDYARMWIQAATTMASYQAVSTAAVAAAPQTTPAPQIVKANAPTAASDEPNQVQEWLQWLQKIGYTDFYNNVIQPFINWLTNLPFLQAMFSGFDPWLPSLGNPLTFLSPANIAFALGYPMDIGSYVAFLSQTFAFIGADLAAAFASGNPATIAFTLMFTTVEAIGTIITDTIALVKTLLEQTLALLPAALPLLAAPLAPLTLAPASAAGGFAGLSGLAGLVGIPPSAPPVIPPVAAIAPSIPTPTPTPAPAPAPTAVTAPTPPLGPPPPPVTAPPPVTGAGIQSFGYLVGDLNSAAQARKAVGTGVRKKTPEPDSAEAPASAAAPEEQVQPQRRRRPKIKQLGRGYEYLDLDPETGHDPTGSPQGAGTLGFAGTTHKASPGQVAGLITLPNDAFGGSPRTPMMPGTWDTDSATRVE.

Residues 8 to 164 (ASPPEVHSAL…ASYQAVSTAA (157 aa)) form a PPE region. The tract at residues 201 to 256 (QKIGYTDFYNNVIQPFINWLTNLPFLQAMFSGFDPWLPSLGNPLTFLSPANIAFAL) is SH3-like. The interval 319-340 (LEQTLALLPAALPLLAAPLAPL) is leucine zipper motif. Disordered regions lie at residues 385-418 (TPTPAPAPAPTAVTAPTPPLGPPPPPVTAPPPVT) and 443-556 (GTGV…TRVE). Pro residues predominate over residues 400–417 (PTPPLGPPPPPVTAPPPV). Low complexity predominate over residues 456-471 (AEAPASAAAPEEQVQP). The segment covering 472 to 481 (QRRRRPKIKQ) has biased composition (basic residues). Residues 473 to 481 (RRRRPKIKQ) carry the Nuclear localization signal motif.

The protein belongs to the mycobacterial PPE family.

It localises to the secreted. It is found in the host cytoplasm. The protein localises to the host nucleus. Inhibits nitric oxide (NO) production in activated macrophages. Acts by inhibiting expression of the host inducible nitric oxide synthase (iNOS). PPE2 is translocated into the host macrophage nucleus, where it interacts with a GATA-binding site overlapping with the TATA box of NOS2 (iNOS) promoter, and strongly inhibits NOS2 gene transcription. Reduction in NO production in turn facilitates intracellular survival of the bacilli inside the macrophage. In addition, disrupts the assembly of NADPH oxidase complex, which inhibits NADPH oxidase-mediated reactive oxygen species (ROS) generation in macrophages and favors M.tuberculosis survival. Acts by interacting with NCF2, the cytosolic subunit of NADPH oxidase, and preventing translocation of NCF2 and NCF1 to the membrane, which causes a reduction of the functional assembly of NADPH oxidase complex and a decrease in NADPH oxidase activity. The polypeptide is PPE family protein PPE2 (PPE2) (Mycobacterium tuberculosis (strain CDC 1551 / Oshkosh)).